A 263-amino-acid chain; its full sequence is 3-deoxy-manno-octulosonate cytidylyltransferase (263 aa).

This sequence belongs to the KdsB family.

The protein localises to the cytoplasm. The catalysed reaction is 3-deoxy-alpha-D-manno-oct-2-ulosonate + CTP = CMP-3-deoxy-beta-D-manno-octulosonate + diphosphate. It functions in the pathway nucleotide-sugar biosynthesis; CMP-3-deoxy-D-manno-octulosonate biosynthesis; CMP-3-deoxy-D-manno-octulosonate from 3-deoxy-D-manno-octulosonate and CTP: step 1/1. It participates in bacterial outer membrane biogenesis; lipopolysaccharide biosynthesis. In terms of biological role, activates KDO (a required 8-carbon sugar) for incorporation into bacterial lipopolysaccharide in Gram-negative bacteria. In Burkholderia vietnamiensis (strain G4 / LMG 22486) (Burkholderia cepacia (strain R1808)), this protein is 3-deoxy-manno-octulosonate cytidylyltransferase.